Here is a 41-residue protein sequence, read N- to C-terminus: Photosystem II reaction center protein Y (41 aa).

The chain crosses the membrane as a helical span at residues 7–25 (IAIVLAPVVIAASWAVFNI).

Belongs to the PsbY family. As to quaternary structure, PSII is composed of 1 copy each of membrane proteins PsbA, PsbB, PsbC, PsbD, PsbE, PsbF, PsbH, PsbI, PsbJ, PsbK, PsbL, PsbM, PsbT, PsbX, PsbY, PsbZ, Psb30/Ycf12, peripheral proteins PsbO, CyanoQ (PsbQ), PsbU, PsbV and a large number of cofactors. It forms dimeric complexes.

It is found in the cellular thylakoid membrane. Functionally, loosely associated component of the core of photosystem II (PSII), it is not always seen in crystals. PSII is a light-driven water plastoquinone oxidoreductase, using light energy to abstract electrons from H(2)O, generating a proton gradient subsequently used for ATP formation. The sequence is that of Photosystem II reaction center protein Y from Nostoc punctiforme (strain ATCC 29133 / PCC 73102).